The following is a 325-amino-acid chain: Leucine carboxyl methyltransferase 1 (325 aa).

Residues arginine 79, glycine 104, aspartate 127, 174 to 175, and glutamate 200 contribute to the S-adenosyl-L-methionine site; that span reads DL.

The protein belongs to the methyltransferase superfamily. LCMT family.

It catalyses the reaction [phosphatase 2A protein]-C-terminal L-leucine + S-adenosyl-L-methionine = [phosphatase 2A protein]-C-terminal L-leucine methyl ester + S-adenosyl-L-homocysteine. In terms of biological role, methylates the carboxyl group of the C-terminal leucine residue of protein phosphatase 2A catalytic subunits to form alpha-leucine ester residues. The protein is Leucine carboxyl methyltransferase 1 (PPM1) of Eremothecium gossypii (strain ATCC 10895 / CBS 109.51 / FGSC 9923 / NRRL Y-1056) (Yeast).